The following is a 530-amino-acid chain: Phosphoenolpyruvate carboxykinase (ATP) (530 aa).

Residues R60, Y195, and K201 each coordinate substrate. Residues K201, H221, and 237-245 (GLSGTGKTT) each bind ATP. 2 residues coordinate Mn(2+): K201 and H221. A Mn(2+)-binding site is contributed by D258. ATP is bound by residues E286, R324, and S449. A substrate-binding site is contributed by R324.

The protein belongs to the phosphoenolpyruvate carboxykinase (ATP) family. Mn(2+) is required as a cofactor.

The protein localises to the cytoplasm. The enzyme catalyses oxaloacetate + ATP = phosphoenolpyruvate + ADP + CO2. Its pathway is carbohydrate biosynthesis; gluconeogenesis. Involved in the gluconeogenesis. Catalyzes the conversion of oxaloacetate (OAA) to phosphoenolpyruvate (PEP) through direct phosphoryl transfer between the nucleoside triphosphate and OAA. In Geotalea uraniireducens (strain Rf4) (Geobacter uraniireducens), this protein is Phosphoenolpyruvate carboxykinase (ATP).